A 195-amino-acid polypeptide reads, in one-letter code: Imidazoleglycerol-phosphate dehydratase (195 aa).

The protein belongs to the imidazoleglycerol-phosphate dehydratase family.

Its subcellular location is the cytoplasm. It catalyses the reaction D-erythro-1-(imidazol-4-yl)glycerol 3-phosphate = 3-(imidazol-4-yl)-2-oxopropyl phosphate + H2O. Its pathway is amino-acid biosynthesis; L-histidine biosynthesis; L-histidine from 5-phospho-alpha-D-ribose 1-diphosphate: step 6/9. The sequence is that of Imidazoleglycerol-phosphate dehydratase from Methylorubrum populi (strain ATCC BAA-705 / NCIMB 13946 / BJ001) (Methylobacterium populi).